Reading from the N-terminus, the 156-residue chain is Nuclear cap-binding protein subunit 2 (156 aa).

The residue at position 2 (Ser2) is an N-acetylserine. Residues Ser13 and Ser18 each carry the phosphoserine modification. MRNA contacts are provided by residues Tyr20, Tyr43, 112–116, 123–127, and 133–134; these read RTDWD, RQYGR, and QV. An RRM domain is found at 40–118; it reads CTLYVGNLSF…RIIRTDWDAG (79 aa). The segment at 124–156 is disordered; it reads QYGRGRSGGQVRDEYREDYDAGRGGYGKLAQKQ. Positions 134–144 are enriched in basic and acidic residues; it reads VRDEYREDYDA. Arg146 is modified (omega-N-methylarginine).

Belongs to the RRM NCBP2 family. As to quaternary structure, component of the nuclear cap-binding complex (CBC), a heterodimer composed of NCBP1/CBP80 and NCBP2/CBP20 that interacts with m7GpppG-capped RNA. Found in a U snRNA export complex with PHAX/RNUXA, NCBP1/CBP80, NCBP2/CBP20, RAN, XPO1 and m7G-capped RNA. Interacts with PHAX/RNUXA, EIF4G1, HNRNPF, HNRNPH1 and ALYREF/THOC4/ALY. Interacts with SRRT/ARS2 and KPNA3.

It is found in the nucleus. Its subcellular location is the cytoplasm. Component of the cap-binding complex (CBC), which binds co-transcriptionally to the 5' cap of pre-mRNAs and is involved in various processes such as pre-mRNA splicing, translation regulation, nonsense-mediated mRNA decay, RNA-mediated gene silencing (RNAi) by microRNAs (miRNAs) and mRNA export. The CBC complex is involved in mRNA export from the nucleus via its interaction with ALYREF/THOC4/ALY, leading to the recruitment of the mRNA export machinery to the 5' end of mRNA and to mRNA export in a 5' to 3' direction through the nuclear pore. The CBC complex is also involved in mediating U snRNA and intronless mRNAs export from the nucleus. The CBC complex is essential for a pioneer round of mRNA translation, before steady state translation when the CBC complex is replaced by cytoplasmic cap-binding protein eIF4E. The pioneer round of mRNA translation mediated by the CBC complex plays a central role in nonsense-mediated mRNA decay (NMD), NMD only taking place in mRNAs bound to the CBC complex, but not on eIF4E-bound mRNAs. The CBC complex enhances NMD in mRNAs containing at least one exon-junction complex (EJC) via its interaction with UPF1, promoting the interaction between UPF1 and UPF2. The CBC complex is also involved in 'failsafe' NMD, which is independent of the EJC complex, while it does not participate in Staufen-mediated mRNA decay (SMD). During cell proliferation, the CBC complex is also involved in microRNAs (miRNAs) biogenesis via its interaction with SRRT/ARS2, thereby being required for miRNA-mediated RNA interference. The CBC complex also acts as a negative regulator of PARN, thereby acting as an inhibitor of mRNA deadenylation. In the CBC complex, NCBP2/CBP20 recognizes and binds capped RNAs (m7GpppG-capped RNA) but requires NCBP1/CBP80 to stabilize the movement of its N-terminal loop and lock the CBC into a high affinity cap-binding state with the cap structure. The conventional cap-binding complex with NCBP2 binds both small nuclear RNA (snRNA) and messenger (mRNA) and is involved in their export from the nucleus. The protein is Nuclear cap-binding protein subunit 2 (Ncbp2) of Mus musculus (Mouse).